The sequence spans 92 residues: Beta-2-microglobulin (92 aa).

In terms of domain architecture, Ig-like C1-type spans 2 to 91 (PQIQVYTRHP…VSMKEPKTVN (90 aa)). The cysteines at positions 22 and 77 are disulfide-linked.

The protein belongs to the beta-2-microglobulin family. As to quaternary structure, heterodimer of an alpha chain and a beta chain. Beta-2-microglobulin is the beta-chain of major histocompatibility complex class I molecules.

The protein localises to the secreted. Component of the class I major histocompatibility complex (MHC). Involved in the presentation of peptide antigens to the immune system. This is Beta-2-microglobulin (B2m) from Mus caroli (Ryukyu mouse).